Here is a 374-residue protein sequence, read N- to C-terminus: Pectate lyase 3 (374 aa).

A signal peptide spans 1-22; sequence MKYLLPSAAAGLLLLAAQPTMA. A disulfide bond links cysteine 93 and cysteine 176. Ca(2+) contacts are provided by aspartate 150, aspartate 152, glutamate 187, and aspartate 191. Arginine 239 is a catalytic residue. An intrachain disulfide couples cysteine 350 to cysteine 373.

This sequence belongs to the polysaccharide lyase 1 family. PLADES subfamily. It depends on Ca(2+) as a cofactor.

It is found in the secreted. It carries out the reaction Eliminative cleavage of (1-&gt;4)-alpha-D-galacturonan to give oligosaccharides with 4-deoxy-alpha-D-galact-4-enuronosyl groups at their non-reducing ends.. The protein operates within glycan metabolism; pectin degradation; 2-dehydro-3-deoxy-D-gluconate from pectin: step 2/5. Functionally, involved in maceration and soft-rotting of plant tissue. This chain is Pectate lyase 3 (pel3), found in Pectobacterium carotovorum subsp. carotovorum (Erwinia carotovora subsp. carotovora).